Reading from the N-terminus, the 157-residue chain is Endoribonuclease YbeY (157 aa).

Zn(2+)-binding residues include histidine 111, histidine 115, and histidine 121. The disordered stretch occupies residues glutamate 136 to histidine 157. Residues tyrosine 147–histidine 157 show a composition bias toward acidic residues.

The protein belongs to the endoribonuclease YbeY family. The cofactor is Zn(2+).

Its subcellular location is the cytoplasm. In terms of biological role, single strand-specific metallo-endoribonuclease involved in late-stage 70S ribosome quality control and in maturation of the 3' terminus of the 16S rRNA. In Pseudomonas putida (strain ATCC 700007 / DSM 6899 / JCM 31910 / BCRC 17059 / LMG 24140 / F1), this protein is Endoribonuclease YbeY.